Consider the following 82-residue polypeptide: Apovitellenin-1 (82 aa).

The protein belongs to the apovitellenin family. As to quaternary structure, monomer. Found in egg yolk and in plasma.

Functionally, protein component of the very low density lipoprotein (VLDL) of egg-laying females. Potent lipoprotein lipase inhibitor, preventing the loss of triglycerides from VLDL on their way from the liver to the growing oocytes. The protein is Apovitellenin-1 of Meleagris gallopavo (Wild turkey).